We begin with the raw amino-acid sequence, 194 residues long: 13S globulin basic chain (194 aa).

In terms of domain architecture, Cupin type-1 spans 13-162 (ENIKSPQEAD…SFQISSEEAE (150 aa)).

Belongs to the 11S seed storage protein (globulins) family. Hexamer; each subunit is composed of an acidic and a basic chain derived from a single precursor and linked by a disulfide bond. In terms of tissue distribution, cotyledons and endosperm protein bodies.

In terms of biological role, seed storage protein with a relatively high level of Lys and Met. The sequence is that of 13S globulin basic chain from Fagopyrum esculentum (Common buckwheat).